Consider the following 450-residue polypeptide: Exodeoxyribonuclease 7 large subunit (450 aa).

Belongs to the XseA family. In terms of assembly, heterooligomer composed of large and small subunits.

It is found in the cytoplasm. The enzyme catalyses Exonucleolytic cleavage in either 5'- to 3'- or 3'- to 5'-direction to yield nucleoside 5'-phosphates.. Its function is as follows. Bidirectionally degrades single-stranded DNA into large acid-insoluble oligonucleotides, which are then degraded further into small acid-soluble oligonucleotides. This is Exodeoxyribonuclease 7 large subunit from Listeria innocua serovar 6a (strain ATCC BAA-680 / CLIP 11262).